Reading from the N-terminus, the 445-residue chain is tRNA modification GTPase MnmE (445 aa).

3 residues coordinate (6S)-5-formyl-5,6,7,8-tetrahydrofolate: R20, E79, and K119. The region spanning 215–371 (GLKLAIIGPP…ILKNIENIAE (157 aa)) is the TrmE-type G domain. Position 225 (N225) interacts with K(+). Residues 225–230 (NAGKSS), 244–250 (SNIAGTT), and 269–272 (DTAG) each bind GTP. A Mg(2+)-binding site is contributed by S229. K(+)-binding residues include S244, I246, and T249. T250 lines the Mg(2+) pocket. K445 is a binding site for (6S)-5-formyl-5,6,7,8-tetrahydrofolate.

It belongs to the TRAFAC class TrmE-Era-EngA-EngB-Septin-like GTPase superfamily. TrmE GTPase family. Homodimer. Heterotetramer of two MnmE and two MnmG subunits. It depends on K(+) as a cofactor.

It is found in the cytoplasm. In terms of biological role, exhibits a very high intrinsic GTPase hydrolysis rate. Involved in the addition of a carboxymethylaminomethyl (cmnm) group at the wobble position (U34) of certain tRNAs, forming tRNA-cmnm(5)s(2)U34. This Rickettsia canadensis (strain McKiel) protein is tRNA modification GTPase MnmE.